Reading from the N-terminus, the 266-residue chain is MLLLARPPKAWHRLFQLQPLALLGTPGGKTQHVRYQLFSTPGPADTGRQGQPQGPGLRTRLLVTALVGAGLGGAWLALRAEKERGRQQQRTEALRQAAVGQGDFSLLDHRGRVRCKADFRGQWVLLYFGFTHCPDICPDELEKLVQVVRQLEAEPGLPPVQPLFITVDPERDTVAAMARYVQDFHPRLLGLTGSAEQIAQVSRSYRVYYSAGPKDEDQDYIVDHSIAIYLLSPDGLFTDYYSRARSAEQITDSVRRHMAAFRSVLR.

Residues 1–41 (MLLLARPPKAWHRLFQLQPLALLGTPGGKTQHVRYQLFSTP) constitute a mitochondrion transit peptide. The Mitochondrial matrix segment spans residues 42–60 (GPADTGRQGQPQGPGLRTR). A helical transmembrane segment spans residues 61–78 (LLVTALVGAGLGGAWLAL). The Mitochondrial intermembrane segment spans residues 79-266 (RAEKERGRQQ…HMAAFRSVLR (188 aa)). One can recognise a Thioredoxin domain in the interval 85-259 (GRQQQRTEAL…ITDSVRRHMA (175 aa)). The Cu cation site is built by cysteine 133, cysteine 137, and histidine 224. Cysteine 133 and cysteine 137 form a disulfide bridge.

It belongs to the SCO1/2 family. As to quaternary structure, homodimer. Interacts with COA6. Found in a complex with TMEM177, COX20, COA6, MT-CO2/COX2, COX18 and SCO1. Interacts with TMEM177 in a COX20-dependent manner. Interacts with COX20 in a MT-CO2/COX2- and COX18-dependent manner. Interacts with COX16.

It localises to the mitochondrion inner membrane. In terms of biological role, copper metallochaperone essential for the synthesis and maturation of cytochrome c oxidase subunit II (MT-CO2/COX2) by facilitating the incorporation of copper into the Cu(A) site of MT-CO2/COX2. Could also act as a thiol-disulfide oxidoreductase to regulate the redox state of the cysteines in SCO1 during maturation of MT-CO2/COX2. This chain is Protein SCO2 homolog, mitochondrial (SCO2), found in Bos taurus (Bovine).